Here is a 689-residue protein sequence, read N- to C-terminus: uncharacterized protein (689 aa).

The protein localises to the mitochondrion. This is an uncharacterized protein from Schizosaccharomyces pombe (strain 972 / ATCC 24843) (Fission yeast).